The following is a 257-amino-acid chain: MTKVIEALSDWQSIRKTINDLSVGFVPTMGNLHAGHLSLLERSKCENTITVLSLFINPTQFNNKNDFKNYPRTLAQDIAMAEENGIDYVLAPTDDALYPDQYAYKITNSTINNQEAEFRPRHFDGVLTVVMKLLLLVKPTRAYFGEKDYQQLQLVKGLAEAFFLDTEIIGCKIVRNEFGLPLSSRNRRLTEDQYQLAQRFSEIFHSDLSCDEIKNALIQEGIIVDYIEDYNERRFAAVHVGDIRLIDNIPFAKDKKC.

29–36 lines the ATP pocket; the sequence is MGNLHAGH. His36 functions as the Proton donor in the catalytic mechanism. Gln60 is a binding site for (R)-pantoate. Residue Gln60 participates in beta-alanine binding. 145 to 148 provides a ligand contact to ATP; sequence GEKD. (R)-pantoate is bound at residue Gln151. ATP is bound by residues Val174 and 182 to 185; that span reads LSSR.

This sequence belongs to the pantothenate synthetase family. As to quaternary structure, homodimer.

It localises to the cytoplasm. The catalysed reaction is (R)-pantoate + beta-alanine + ATP = (R)-pantothenate + AMP + diphosphate + H(+). It participates in cofactor biosynthesis; (R)-pantothenate biosynthesis; (R)-pantothenate from (R)-pantoate and beta-alanine: step 1/1. In terms of biological role, catalyzes the condensation of pantoate with beta-alanine in an ATP-dependent reaction via a pantoyl-adenylate intermediate. This chain is Pantothenate synthetase, found in Coxiella burnetii (strain Dugway 5J108-111).